Consider the following 231-residue polypeptide: Phosphatidylserine decarboxylase proenzyme (231 aa).

Residue serine 188 is the Schiff-base intermediate with substrate; via pyruvic acid of the active site. Position 188 is a pyruvic acid (Ser); by autocatalysis (serine 188).

Belongs to the phosphatidylserine decarboxylase family. PSD-A subfamily. Heterodimer of a large membrane-associated beta subunit and a small pyruvoyl-containing alpha subunit. Requires pyruvate as cofactor. In terms of processing, is synthesized initially as an inactive proenzyme. Formation of the active enzyme involves a self-maturation process in which the active site pyruvoyl group is generated from an internal serine residue via an autocatalytic post-translational modification. Two non-identical subunits are generated from the proenzyme in this reaction, and the pyruvate is formed at the N-terminus of the alpha chain, which is derived from the carboxyl end of the proenzyme. The post-translation cleavage follows an unusual pathway, termed non-hydrolytic serinolysis, in which the side chain hydroxyl group of the serine supplies its oxygen atom to form the C-terminus of the beta chain, while the remainder of the serine residue undergoes an oxidative deamination to produce ammonia and the pyruvoyl prosthetic group on the alpha chain.

The protein localises to the cell membrane. The enzyme catalyses a 1,2-diacyl-sn-glycero-3-phospho-L-serine + H(+) = a 1,2-diacyl-sn-glycero-3-phosphoethanolamine + CO2. The protein operates within phospholipid metabolism; phosphatidylethanolamine biosynthesis; phosphatidylethanolamine from CDP-diacylglycerol: step 2/2. Its function is as follows. Catalyzes the formation of phosphatidylethanolamine (PtdEtn) from phosphatidylserine (PtdSer). The polypeptide is Phosphatidylserine decarboxylase proenzyme (Rickettsia felis (strain ATCC VR-1525 / URRWXCal2) (Rickettsia azadi)).